The chain runs to 839 residues: Taste receptor type 1 member 2 (839 aa).

Positions 1–19 are cleaved as a signal peptide; it reads MRPRATTICSLFFLLRVLA. The Extracellular portion of the chain corresponds to 20 to 566; it reads EPAKNSDFYL…AFLEWHEAPT (547 aa). Residues N84, N127, N248, N292, N312, N368, N428, N487, and N527 are each glycosylated (N-linked (GlcNAc...) asparagine). The helical transmembrane segment at 567–587 threads the bilayer; that stretch reads IVVALLAALGFLSTLAILVIF. Topologically, residues 588–602 are cytoplasmic; it reads WRHFQTPMVRSAGGP. A helical transmembrane segment spans residues 603-623; sequence MCFLMLTLLLVAYMVVPVYVG. The Extracellular portion of the chain corresponds to 624–635; it reads PPKVSTCFCRQA. Residues 636–656 traverse the membrane as a helical segment; the sequence is LFPLCFTICISCIAVRSFQIV. Over 657-681 the chain is Cytoplasmic; sequence CVFKMASRFPRAYSYWVRYQGPYVS. A helical transmembrane segment spans residues 682 to 702; the sequence is MAFITVLKMVTVVIGMLATGL. At 703-727 the chain is on the extracellular side; sequence NPTTRIDPDDPKIMIVSCNPNYRNS. A helical membrane pass occupies residues 728-748; that stretch reads LFFNTGLDLLLSVVGFSFAYM. The Cytoplasmic portion of the chain corresponds to 749 to 760; that stretch reads GKELPTNYNEAK. Residues 761 to 781 traverse the membrane as a helical segment; sequence FITLSMTFYFTSSVSLCTFMS. Topologically, residues 782 to 784 are extracellular; the sequence is AYN. The chain crosses the membrane as a helical span at residues 785–805; the sequence is GVLVTIMDLLVTVLNLLAISL. Residues 806–839 are Cytoplasmic-facing; that stretch reads GYFGPKCYMILFYPERNTPAYFNSMIQGYTMRRD.

This sequence belongs to the G-protein coupled receptor 3 family. TAS1R subfamily. As to quaternary structure, forms heterodimers with TAS1R3.

It is found in the cell membrane. Functionally, putative taste receptor. TAS1R2/TAS1R3 recognizes diverse natural and synthetic sweeteners. In Macaca mulatta (Rhesus macaque), this protein is Taste receptor type 1 member 2 (TAS1R2).